Reading from the N-terminus, the 451-residue chain is Serine--tRNA ligase (451 aa).

247–249 serves as a coordination point for L-serine; that stretch reads TAE. ATP-binding positions include 278-280 and valine 294; that span reads RKE. Glutamate 301 contributes to the L-serine binding site. ATP is bound at residue 365–368; that stretch reads ELAS. An L-serine-binding site is contributed by threonine 400.

It belongs to the class-II aminoacyl-tRNA synthetase family. Type-1 seryl-tRNA synthetase subfamily. As to quaternary structure, homodimer. The tRNA molecule binds across the dimer.

Its subcellular location is the cytoplasm. It carries out the reaction tRNA(Ser) + L-serine + ATP = L-seryl-tRNA(Ser) + AMP + diphosphate + H(+). The enzyme catalyses tRNA(Sec) + L-serine + ATP = L-seryl-tRNA(Sec) + AMP + diphosphate + H(+). Its pathway is aminoacyl-tRNA biosynthesis; selenocysteinyl-tRNA(Sec) biosynthesis; L-seryl-tRNA(Sec) from L-serine and tRNA(Sec): step 1/1. Its function is as follows. Catalyzes the attachment of serine to tRNA(Ser). Is also able to aminoacylate tRNA(Sec) with serine, to form the misacylated tRNA L-seryl-tRNA(Sec), which will be further converted into selenocysteinyl-tRNA(Sec). In Pyrobaculum aerophilum (strain ATCC 51768 / DSM 7523 / JCM 9630 / CIP 104966 / NBRC 100827 / IM2), this protein is Serine--tRNA ligase.